Consider the following 423-residue polypeptide: UDP-N-acetylglucosamine 1-carboxyvinyltransferase (423 aa).

Lysine 22–asparagine 23 lines the phosphoenolpyruvate pocket. Position 93 (arginine 93) interacts with UDP-N-acetyl-alpha-D-glucosamine. Cysteine 117 serves as the catalytic Proton donor. Cysteine 117 is subject to 2-(S-cysteinyl)pyruvic acid O-phosphothioketal. UDP-N-acetyl-alpha-D-glucosamine-binding positions include arginine 122–leucine 126, aspartate 307, and valine 329.

Belongs to the EPSP synthase family. MurA subfamily.

The protein localises to the cytoplasm. The catalysed reaction is phosphoenolpyruvate + UDP-N-acetyl-alpha-D-glucosamine = UDP-N-acetyl-3-O-(1-carboxyvinyl)-alpha-D-glucosamine + phosphate. It functions in the pathway cell wall biogenesis; peptidoglycan biosynthesis. Its function is as follows. Cell wall formation. Adds enolpyruvyl to UDP-N-acetylglucosamine. This Chlorobium chlorochromatii (strain CaD3) protein is UDP-N-acetylglucosamine 1-carboxyvinyltransferase.